We begin with the raw amino-acid sequence, 444 residues long: Vacuolar protein sorting-associated protein 4B (444 aa).

The MIT domain maps to 4–82 (TSPNLQKAID…KEYLKNKEKK (79 aa)). Residues 19–82 (AQEDKAGNYE…KEYLKNKEKK (64 aa)) adopt a coiled-coil conformation. A compositionally biased stretch (basic and acidic residues) spans 78–88 (NKEKKAQKPVK). The disordered stretch occupies residues 78–117 (NKEKKAQKPVKEGQPSPADEKGNDSDGEGESDDPEKKKLQ). Ser-93, Ser-102, and Ser-108 each carry phosphoserine. 174–181 (GPPGTGKS) contacts ATP. Ser-410 bears the Phosphoserine mark.

This sequence belongs to the AAA ATPase family. Proposed to be monomeric or homodimeric in nucleotide-free form and to oligomerize upon binding to ATP to form two stacked hexameric or heptameric rings with a central pore through which ESCRT-III substrates are translocated in an ATP-dependent manner. In vitro, associates on the inside of a helical tubular structure formed by a CHMP2A-CHMP3 polymer. Interacts with CHMP1A, CHMP1B, CHMP2A, CHMP4B and CHMP6. Interacts with VPS4A; the interaction suggests a heteromeric assembly with VPS4A. Interacts with VTA1.

It is found in the late endosome membrane. The catalysed reaction is ATP + H2O = ADP + phosphate + H(+). Functionally, involved in late steps of the endosomal multivesicular bodies (MVB) pathway. Recognizes membrane-associated ESCRT-III assemblies and catalyzes their disassembly, possibly in combination with membrane fission. Redistributes the ESCRT-III components to the cytoplasm for further rounds of MVB sorting. MVBs contain intraluminal vesicles (ILVs) that are generated by invagination and scission from the limiting membrane of the endosome and mostly are delivered to lysosomes enabling degradation of membrane proteins, such as stimulated growth factor receptors, lysosomal enzymes and lipids. VPS4A/B are required for the exosomal release of SDCBP, CD63 and syndecan. In terms of biological role, (Microbial infection) In conjunction with the ESCRT machinery also appears to function in topologically equivalent membrane fission events, such as the terminal stages of cytokinesis and enveloped virus budding (lentiviruses). This Pongo abelii (Sumatran orangutan) protein is Vacuolar protein sorting-associated protein 4B (VPS4B).